The primary structure comprises 662 residues: Pollen receptor-like kinase 1 (662 aa).

The N-terminal stretch at 1 to 31 (MPPMQARTLSVYNVMVPLVCLLLFFSTPTHG) is a signal peptide. At 32 to 256 (LSDSEAILKF…ARPKSSSRGP (225 aa)) the chain is on the extracellular side. LRR repeat units lie at residues 79–98 (QMEN…SGLT), 99–121 (SLRT…KKLA), 122–144 (ALKS…AFEG), 147–169 (WLKK…VAKL), 171–191 (KLLE…EFEH), and 192–214 (QLHL…LSMT). A glycan (N-linked (GlcNAc...) asparagine) is linked at asparagine 197. Residues 233 to 253 (ECDSPYIEHPPQSEARPKSSS) are disordered. The chain crosses the membrane as a helical span at residues 257-277 (LVITAIVAALTILIILGVIFL). At 278–662 (LNRSYKNKKP…GESCESISFA (385 aa)) the chain is on the cytoplasmic side. The interval 288-330 (RLAVETGPSSLQKKTGIREADQSRRDRKKADHRKGSGTTKRMG) is disordered. The Protein kinase domain occupies 357–639 (KASAEILGSG…EREGDDDDFY (283 aa)). Phosphoserine is present on serine 359. Residues 363–371 (LGSGCFGAS) and lysine 385 each bind ATP. Phosphoserine is present on serine 437. Threonine 457 carries the post-translational modification Phosphothreonine. Residue tyrosine 527 is modified to Phosphotyrosine. The segment at 636–662 (DDFYSTYVSETDGRSSKGESCESISFA) is disordered. Basic and acidic residues predominate over residues 646 to 655 (TDGRSSKGES).

It belongs to the protein kinase superfamily. Ser/Thr protein kinase family. Interacts in vitro with ROPGEF1 (via PRONE domain). In terms of tissue distribution, expressed in pollen and/or in flowers, but not in leaves.

It is found in the cell membrane. The enzyme catalyses L-seryl-[protein] + ATP = O-phospho-L-seryl-[protein] + ADP + H(+). It carries out the reaction L-threonyl-[protein] + ATP = O-phospho-L-threonyl-[protein] + ADP + H(+). Functionally, receptor-like kinase involved in the control of pollen germination and pollen tube polar growth. The polypeptide is Pollen receptor-like kinase 1 (Arabidopsis thaliana (Mouse-ear cress)).